A 300-amino-acid chain; its full sequence is Bifunctional protein FolD 1 (300 aa).

NADP(+) contacts are provided by residues 166–168 (GRS), serine 191, and isoleucine 232.

It belongs to the tetrahydrofolate dehydrogenase/cyclohydrolase family. Homodimer.

It catalyses the reaction (6R)-5,10-methylene-5,6,7,8-tetrahydrofolate + NADP(+) = (6R)-5,10-methenyltetrahydrofolate + NADPH. The enzyme catalyses (6R)-5,10-methenyltetrahydrofolate + H2O = (6R)-10-formyltetrahydrofolate + H(+). The protein operates within one-carbon metabolism; tetrahydrofolate interconversion. Catalyzes the oxidation of 5,10-methylenetetrahydrofolate to 5,10-methenyltetrahydrofolate and then the hydrolysis of 5,10-methenyltetrahydrofolate to 10-formyltetrahydrofolate. This chain is Bifunctional protein FolD 1, found in Roseobacter denitrificans (strain ATCC 33942 / OCh 114) (Erythrobacter sp. (strain OCh 114)).